The primary structure comprises 244 residues: 5-oxoprolinase subunit A (244 aa).

The protein belongs to the LamB/PxpA family. Forms a complex composed of PxpA, PxpB and PxpC.

It catalyses the reaction 5-oxo-L-proline + ATP + 2 H2O = L-glutamate + ADP + phosphate + H(+). Functionally, catalyzes the cleavage of 5-oxoproline to form L-glutamate coupled to the hydrolysis of ATP to ADP and inorganic phosphate. The polypeptide is 5-oxoprolinase subunit A (Escherichia coli (strain K12)).